A 216-amino-acid chain; its full sequence is MAEQLTLDSIEPEPEKQSAKIEKRSIKERRQQVLTVLTHLLHSEKGMERMTTARLAKEVGVSEAALYRYFPSKTKMFEALIENIESSLFSRISYSIKMETNTLNRVHDILQMIFDFARKNPGLTRVLTGHALMFEEAKLQARVALFFDRLELQFVNILQMRKLREGKTFPIDERTIATYLVTFCEGQFMRLVRTNFRHMPNQGFEQQWRFIEPLFE.

Residues 1 to 23 (MAEQLTLDSIEPEPEKQSAKIEK) form a disordered region. Basic and acidic residues predominate over residues 13–23 (EPEKQSAKIEK). Residues 28 to 88 (ERRQQVLTVL…ALIENIESSL (61 aa)) enclose the HTH tetR-type domain. The H-T-H motif DNA-binding region spans 51–70 (TTARLAKEVGVSEAALYRYF).

The protein belongs to the nucleoid occlusion factor SlmA family. In terms of assembly, homodimer. Interacts with FtsZ.

The protein localises to the cytoplasm. Its subcellular location is the nucleoid. Its function is as follows. Required for nucleoid occlusion (NO) phenomenon, which prevents Z-ring formation and cell division over the nucleoid. Acts as a DNA-associated cell division inhibitor that binds simultaneously chromosomal DNA and FtsZ, and disrupts the assembly of FtsZ polymers. SlmA-DNA-binding sequences (SBS) are dispersed on non-Ter regions of the chromosome, preventing FtsZ polymerization at these regions. The protein is Nucleoid occlusion factor SlmA of Mannheimia succiniciproducens (strain KCTC 0769BP / MBEL55E).